The primary structure comprises 276 residues: Anthranilate synthase beta subunit 1, chloroplastic (276 aa).

The transit peptide at 1 to 50 directs the protein to the chloroplast; sequence MAASTLYKSCLLQPKSGSTTRRLNPSLVNPLTNPTRVSVLGKSRRDVFAK. Positions 74 to 273 constitute a Glutamine amidotransferase type-1 domain; the sequence is PIIVIDNYDS…IKIVEKKESE (200 aa). The Nucleophile role is filled by Cys-152. Active-site residues include His-247 and Glu-249.

Heterotetramer consisting of two non-identical subunits: a beta subunit and a large alpha subunit. Expressed in the central cylinder of mature primary root zones, including pericycle and early lateral root primordia, and vasculature of cotyledons.

It localises to the plastid. The protein resides in the chloroplast. The catalysed reaction is chorismate + L-glutamine = anthranilate + pyruvate + L-glutamate + H(+). It functions in the pathway amino-acid biosynthesis; L-tryptophan biosynthesis; L-tryptophan from chorismate: step 1/5. Functionally, part of a heterotetrameric complex that catalyzes the two-step biosynthesis of anthranilate, an intermediate in the biosynthesis of L-tryptophan. In the first step, the glutamine-binding beta subunit of anthranilate synthase (AS) provides the glutamine amidotransferase activity which generates ammonia as a substrate that, along with chorismate, is used in the second step, catalyzed by the large alpha subunit of AS to produce anthranilate. Plays an important regulatory role in auxin production via the tryptophan-dependent biosynthetic pathway. This Arabidopsis thaliana (Mouse-ear cress) protein is Anthranilate synthase beta subunit 1, chloroplastic (ASB1).